The chain runs to 280 residues: Exfoliative toxin A (280 aa).

The signal sequence occupies residues 1 to 38 (MNNSKIISKVLLSLSLFTVGASAFVIQDELMQKNHAKA). Residues His-110, Asp-158, and Ser-233 each act as charge relay system in the active site.

This sequence belongs to the peptidase S1B family. It depends on Ca(2+) as a cofactor.

Functionally, has serine protease-like properties and binds to the skin protein profilaggrin. Cleaves substrates after acidic residues. Exfoliative toxins cause impetigous diseases commonly referred as staphylococcal scalded skin syndrome (SSSS). The polypeptide is Exfoliative toxin A (eta) (Staphylococcus aureus).